The following is a 168-amino-acid chain: Small ribosomal subunit protein uS5 (168 aa).

The S5 DRBM domain maps to 13-76 (LKEQVVDIKR…EDAKKNLIHV (64 aa)).

Belongs to the universal ribosomal protein uS5 family. Part of the 30S ribosomal subunit. Contacts proteins S4 and S8.

Functionally, with S4 and S12 plays an important role in translational accuracy. Its function is as follows. Located at the back of the 30S subunit body where it stabilizes the conformation of the head with respect to the body. The chain is Small ribosomal subunit protein uS5 from Alkaliphilus oremlandii (strain OhILAs) (Clostridium oremlandii (strain OhILAs)).